The chain runs to 106 residues: uncharacterized protein (106 aa).

This is an uncharacterized protein from Sinorhizobium fredii (strain NBRC 101917 / NGR234).